The chain runs to 205 residues: CMRF35-like molecule 2 (205 aa).

Positions 1–17 are cleaved as a signal peptide; that stretch reads MWLLPALLLLCLSGCLS. The Ig-like V-type domain occupies 18 to 120; that stretch reads LKGPGSVTGT…VLDSWSRDPS (103 aa). The Extracellular segment spans residues 18–173; that stretch reads LKGPGSVTGT…NSGFRLSSPH (156 aa). Cysteine 36 and cysteine 104 are joined by a disulfide. Asparagine 154 carries an N-linked (GlcNAc...) asparagine glycan. The chain crosses the membrane as a helical span at residues 174–194; sequence FLLVVLLKLPLLLSMLGAVFW. Over 195–205 the chain is Cytoplasmic; the sequence is VNRPQWAPPGR.

This sequence belongs to the CD300 family. In terms of assembly, interacts with TYROBP. In terms of processing, N-glycosylated. As to expression, present on the surface of mature hematopoietic cells of the monocyte and myeloid lineages (at protein level).

It localises to the cell membrane. Its function is as follows. Probably acts as an activating receptor. In Homo sapiens (Human), this protein is CMRF35-like molecule 2 (CD300E).